The following is a 422-amino-acid chain: G2/mitotic-specific cyclin-A (422 aa).

Residues M1–S29 are disordered.

This sequence belongs to the cyclin family. Cyclin AB subfamily.

Functionally, essential for the control of the cell cycle at the G2/M (mitosis) transition. Interacts with the CDC2 and CDK2 protein kinases to form MPF. G2/M cyclins accumulate steadily during G2 and are abruptly destroyed at mitosis. This is G2/mitotic-specific cyclin-A from Spisula solidissima (Atlantic surf-clam).